Reading from the N-terminus, the 464-residue chain is Protein ABHD18 (464 aa).

An N-terminal signal peptide occupies residues 1 to 24 (MGVSKLDILYRRLLLTKLFIRGWG). Asn341 carries N-linked (GlcNAc...) asparagine glycosylation.

This sequence belongs to the AB hydrolase superfamily.

The protein resides in the secreted. This is Protein ABHD18 from Rattus norvegicus (Rat).